A 607-amino-acid polypeptide reads, in one-letter code: V-type proton ATPase catalytic subunit A (607 aa).

An ATP-binding site is contributed by 246–253 (GAFGCGKT).

It belongs to the ATPase alpha/beta chains family. As to quaternary structure, V-ATPase is a heteromultimeric enzyme composed of a peripheral catalytic V1 complex (components A to H) attached to an integral membrane V0 proton pore complex (components: a, c, c', c'', d, e, f and VOA1).

It is found in the vacuole membrane. It carries out the reaction ATP + H2O + 4 H(+)(in) = ADP + phosphate + 5 H(+)(out). In terms of biological role, catalytic subunit of the V1 complex of vacuolar(H+)-ATPase (V-ATPase), a multisubunit enzyme composed of a peripheral complex (V1) that hydrolyzes ATP and a membrane integral complex (V0) that translocates protons. V-ATPase is responsible for acidifying and maintaining the pH of intracellular compartments. This is V-type proton ATPase catalytic subunit A (vma-1) from Neurospora crassa (strain ATCC 24698 / 74-OR23-1A / CBS 708.71 / DSM 1257 / FGSC 987).